The chain runs to 450 residues: Tubulin beta-1 chain (450 aa).

8 residues coordinate GTP: Gln11, Glu69, Ser138, Gly142, Thr143, Gly144, Asn204, and Asn226. Mg(2+) is bound at residue Glu69. Residues 426–450 (QDATADEDEYGEEEGDEEEYGQHDI) form a disordered region. Over residues 429–444 (TADEDEYGEEEGDEEE) the composition is skewed to acidic residues.

It belongs to the tubulin family. As to quaternary structure, dimer of alpha and beta chains. A typical microtubule is a hollow water-filled tube with an outer diameter of 25 nm and an inner diameter of 15 nM. Alpha-beta heterodimers associate head-to-tail to form protofilaments running lengthwise along the microtubule wall with the beta-tubulin subunit facing the microtubule plus end conferring a structural polarity. Microtubules usually have 13 protofilaments but different protofilament numbers can be found in some organisms and specialized cells. Requires Mg(2+) as cofactor.

Its subcellular location is the cytoplasm. The protein localises to the cytoskeleton. Its function is as follows. Tubulin is the major constituent of microtubules, a cylinder consisting of laterally associated linear protofilaments composed of alpha- and beta-tubulin heterodimers. Microtubules grow by the addition of GTP-tubulin dimers to the microtubule end, where a stabilizing cap forms. Below the cap, tubulin dimers are in GDP-bound state, owing to GTPase activity of alpha-tubulin. This chain is Tubulin beta-1 chain (TUBB1), found in Pisum sativum (Garden pea).